The following is a 197-amino-acid chain: Nucleoside triphosphate pyrophosphatase (197 aa).

Catalysis depends on D71, which acts as the Proton acceptor.

Belongs to the Maf family. Requires a divalent metal cation as cofactor.

It is found in the cytoplasm. It catalyses the reaction a ribonucleoside 5'-triphosphate + H2O = a ribonucleoside 5'-phosphate + diphosphate + H(+). The enzyme catalyses a 2'-deoxyribonucleoside 5'-triphosphate + H2O = a 2'-deoxyribonucleoside 5'-phosphate + diphosphate + H(+). In terms of biological role, nucleoside triphosphate pyrophosphatase. May have a dual role in cell division arrest and in preventing the incorporation of modified nucleotides into cellular nucleic acids. The polypeptide is Nucleoside triphosphate pyrophosphatase (Trichormus variabilis (strain ATCC 29413 / PCC 7937) (Anabaena variabilis)).